The sequence spans 552 residues: Acyl-CoA synthetase FUM10 (552 aa).

183 to 194 (ELFTSGTTGAPK) is an AMP binding site. The segment at 463–536 (EIEHVARLHD…QEIPYNRTGK (74 aa)) is AMP-binding.

Belongs to the ATP-dependent AMP-binding enzyme family.

The protein operates within mycotoxin biosynthesis. In terms of biological role, acyl-CoA synthetase; part of the gene cluster that mediates the biosynthesis of fumonisins B1 (FB1), B2 (FB2), B3 (FB3), and B4 (FB4), which are carcinogenic mycotoxins. Within the pathway, FUM10 is involved the addition of the tricarballylic moieties to the carbon backbone. FUM10 catalyzes the CoA activation of citrate to form tricarballylic acid. The biosynthesis starts with the FUM1-catalyzed carbon chain assembly from one molecule of acetyl-CoA, eight molecules of malonyl-CoA, and two molecules of methionine (in S-adenosyl form). The C18 polyketide chain is released from the enzyme by a nucleophilic attack of a carbanion, which is derived from R-carbon of alanine by decarboxylation, on the carbonyl carbon of polyketide acyl chain. This step is catalyzed by the pyridoxal 5'-phosphate-dependent aminoacyl transferase FUM8. The resultant 3-keto intermediate is then stereospecifically reduced to a 3-hydroxyl product by reductase FUM13. Subsequent oxidations at C-10 by the cytochrome P450 monooxygenase FUM2, C-14 and C-15 by FUM6, FUM12 or FUM15, tricarballylic esterification of the hydroxyl groups on C-14 and C-15 by acyltransferase FUM14, and C-5 hydroxylation by 2-keto-glutarate-dependent dioxygenase FUM3 furnish the biosynthesis of fumonisins. The tricarballylic moieties are most likely derived from the citric acid cycle, and their addition to the carbon backbone may involve FUM7, FUM10, FUM11 and FUM14. In Gibberella moniliformis (strain M3125 / FGSC 7600) (Maize ear and stalk rot fungus), this protein is Acyl-CoA synthetase FUM10.